The chain runs to 432 residues: Trigger factor (432 aa).

The region spanning 161 to 246 (EDRVTIDFTG…LKKVEERELP (86 aa)) is the PPIase FKBP-type domain.

Belongs to the FKBP-type PPIase family. Tig subfamily. Homodimer and monomer. In vivo most of the ribosomes are in complex with monomeric TF. Uncomplexed TF, however, is in a monomer-dimer equilibrium with approximately two thirds of TF existing in a dimeric state.

The protein resides in the cytoplasm. It carries out the reaction [protein]-peptidylproline (omega=180) = [protein]-peptidylproline (omega=0). Involved in protein export. Acts as a chaperone by maintaining the newly synthesized protein in an open conformation. Functions as a peptidyl-prolyl cis-trans isomerase. The protein is Trigger factor of Escherichia fergusonii (strain ATCC 35469 / DSM 13698 / CCUG 18766 / IAM 14443 / JCM 21226 / LMG 7866 / NBRC 102419 / NCTC 12128 / CDC 0568-73).